The following is a 102-amino-acid chain: MTEDKQQSDSATIDDIETREPPMYRVLIHNDDYTSMDFVVAILMQIFSKTEAVAEEIMLTVHSSEVGVAGLYTHEIAETKVAIVHQLAEQNEFPLRCSLEKE.

It belongs to the ClpS family. As to quaternary structure, binds to the N-terminal domain of the chaperone ClpA.

Involved in the modulation of the specificity of the ClpAP-mediated ATP-dependent protein degradation. This chain is ATP-dependent Clp protease adapter protein ClpS, found in Desulfotalea psychrophila (strain LSv54 / DSM 12343).